The sequence spans 314 residues: MSGKPAPAHRAVLLEEAVEALAVRPDGIYLDGTFGRGGHSGRILERLGPDGRLIALDRDPEAEAEAARRFGDDERFHFERCSFEMLQQVTDRLGISGRLDGVLLDLGVSSPQLDTPERGFSFMSDGPLDMRMDPESGESAAAWLARANEDEIAWVLKEYGEERFARRIARRIVETRQEMPLERTRQLAELIAEAVPFKERHKHPATRSFQAIRIRVNDELETLPRCLEQIPALLAPGGRLAVISFHSLEDRMVKRFLRDQAEGERLPRGLPVQGDARRGQTLRLVGRAIRAGEAELDQNPRARSAVLRVAERLA.

S-adenosyl-L-methionine contacts are provided by residues 37-39 (GGH), Asp-57, Phe-83, Asp-105, and Gln-112.

The protein belongs to the methyltransferase superfamily. RsmH family.

It localises to the cytoplasm. The enzyme catalyses cytidine(1402) in 16S rRNA + S-adenosyl-L-methionine = N(4)-methylcytidine(1402) in 16S rRNA + S-adenosyl-L-homocysteine + H(+). Functionally, specifically methylates the N4 position of cytidine in position 1402 (C1402) of 16S rRNA. This chain is Ribosomal RNA small subunit methyltransferase H, found in Thioalkalivibrio sulfidiphilus (strain HL-EbGR7).